A 349-amino-acid polypeptide reads, in one-letter code: MAIPITVLDCDLLLYGRGHRTLDRFKLDDVTDEYLMSMYGFPRQFIYYLVELLGASLSRPTQRSRAISPETQILAALGFYTSGSFQTRMGDAIGISQASMSRCVANVTEALVERASQFIHFPADEAAIQSLKDEFYGLAGMPGVIGAVDCIHVAIKAPNAEDLSYVNRKGLHSLNCLVVCDIRGALMTVETSWPGSLQDCAVLQQSSLSSQFETGMPKDSWLLGDSSFFLHTWLLTPLHIPETPAEYRYNRAHSATHSVIEKTLRTLCCRFRCLDGSKGALQYSPEKSSHIILACCVLHNISLEHGMDVWSSPVTGPIEQPPEGEDEQMESLDLEADRIRQELILTHFS.

Residues 148-300 (VDCIHVAIKA…IILACCVLHN (153 aa)) form the DDE Tnp4 domain. Positions 149, 199, 225, and 261 each coordinate a divalent metal cation.

The protein belongs to the HARBI1 family. As to quaternary structure, interacts with NAIF1. A divalent metal cation is required as a cofactor.

The protein localises to the nucleus. The protein resides in the cytoplasm. Its function is as follows. Transposase-derived protein that may have nuclease activity (Potential). Does not have transposase activity. In Rattus norvegicus (Rat), this protein is Putative nuclease HARBI1 (Harbi1).